A 248-amino-acid chain; its full sequence is MTKVVLIRHGESVWNKENLFTGWADVTLSEKGIEEAKAGGAELKKAGFTFDKAYTSTLTRAIKTLNLVLEEMGLLWIPVDKCWQLNERHYGALQGLNKSQTAEKYGEDQVKIWRRSYDTPPPALEKSDERYPGHDPRYKNLSEKELPLTECLKDTVARVVPFWENVILPDIKAGKKIIIAAHGNSLRALVKYLDNISDADITELNIPTGMPLVYELDDNFKAVNKQYLGDPEAVKKAMEAVANQGKKK.

Substrate contacts are provided by residues 8-15, 21-22, R60, 87-90, K98, 114-115, and 183-184; these read RHGESVWN, TG, ERHY, RR, and GN. The Tele-phosphohistidine intermediate role is filled by H9. The active-site Proton donor/acceptor is E87.

This sequence belongs to the phosphoglycerate mutase family. BPG-dependent PGAM subfamily.

The catalysed reaction is (2R)-2-phosphoglycerate = (2R)-3-phosphoglycerate. The protein operates within carbohydrate degradation; glycolysis; pyruvate from D-glyceraldehyde 3-phosphate: step 3/5. In terms of biological role, catalyzes the interconversion of 2-phosphoglycerate and 3-phosphoglycerate. The sequence is that of 2,3-bisphosphoglycerate-dependent phosphoglycerate mutase from Brachyspira hyodysenteriae (strain ATCC 49526 / WA1).